Here is a 340-residue protein sequence, read N- to C-terminus: Immunoglobulin-binding protein 1 (340 aa).

The UIM domain occupies 47 to 61; the sequence is LELLEKAAGMLSQLD. The segment at 99-203 is interaction with PPP2CA; that stretch reads RLDHLQRARE…HLLHLRRWIA (105 aa). Disordered stretches follow at residues 223 to 242 and 291 to 340; these read DSPR…PPMK and SADF…QNMG. Positions 226-291 are interaction with MID1; that stretch reads REETACHSSL…PDRGIAKPAS (66 aa). The residue at position 242 (K242) is an N6-acetyllysine. Residues 292 to 301 show a composition bias toward low complexity; sequence ADFQRAAQQQ. The segment covering 302–312 has biased composition (acidic residues); sequence EDQEQKDEESE. The span at 313-330 shows a compositional bias: basic and acidic residues; it reads EKALHRMREWDDWKDTHP.

Belongs to the IGBP1/TAP42 family. In terms of assembly, interacts with PPP2CB, and with PP4 and PP6. Interacts with MID2. Interacts with ubiquitin. Interacts with partially folded PPP2CA, but not with the fully active protein. Interacts with MID1. Phosphorylated. Post-translationally, monoubiquitination by MID1 triggers calpain-mediated cleavage and switches IGBP1 activity from protective to destructive. In terms of tissue distribution, expressed in spleen, thymus, liver and brain. Ubiquitously expressed in B lineage cell lines.

The protein resides in the cytoplasm. Its function is as follows. Associated to surface IgM-receptor; may be involved in signal transduction. Involved in regulation of the catalytic activity of the phosphatases PP2A, PP4 and PP6 by protecting their partially folded catalytic subunits from degradative polyubiquitination until they associate with regulatory subunits. The sequence is that of Immunoglobulin-binding protein 1 (Igbp1) from Mus musculus (Mouse).